A 997-amino-acid chain; its full sequence is MDYNVKDFGALGDGVSDDTAAIQAAIDAAYAAGGGTVYLPAGEYRVSGGEEPSDGCLTIKSNVHIVGAGMGETVIKLVDGWDQDVTGIVRSAYGEETSNFGMSDLTLDGNRDNTSGKVDGWFNGYIPGEDGADRDVTLERVEIREMSGYGFDPHEQTINLTIRDSVAHDNGLDGFVADFQIGGVFENNVSYNNDRHGFNIVTSTNDFVLSNNVAYGNGGAGLVVQRGSSDVAHPYDILIDGGAYYDNGLEGVQIKMAHDVTLQNAEIYGNGLYGVRVYGAEDVQILDNYIHDNSQNGSYAEILLQSYDDTAGVSGNFYTTTGTWIEGNTIVGSANSTYGIQERDDGTDYSSLYANSVSNVQNGSVRLYGANSVVSDLPGTGQQATLEGTAGNDTLGGSDAHETLLGLDGNDRLNGGAGNDILDGGAGRDNLTGGAGADLFRVSARTDSYRTDSASFNDLITDFDASQDRIDLSALGFTGLGDGYNGTLLLQVSADGSRTYLKSLEADAEGRRFEIALDGNFAGLLGAGNLLFERTAIEGDAGDNALLGTSAAETLLGHAGNDTLDGGAGDDILVGGAGRDSLTGGAGADVFRFDALSDSQRNYDIGDNQGDRIADFAVGEDKLDVSALGFTGLGDGYNGTLALVLNSAGDRTYVKSYENGADGYRFEFSLDGNYLELLGNEDFIFATPSGQQLLEGSAGNDSLQGTAADEVIHGGGGRDTLAGGAGADVFRFSELTDSYRDSASYADLITDFDASEDRIDLSGLGFSGLGNGYGGTLALQVNSAGTRTYLKSFETNAAGERFEIALDGDLSALGGANLILDARTVLAGGDGNDTLSGSSAAEELLGGVGNDSLDGGAGNDILDGGAGRDTLSGGSGSDIFRFGGALDSFRNYASGTNGTDSITDFTPGEDLIDLSVLGYTGLGDGYNGTLAIVLNDAGTKTYLKNRESDAEGNQFEIALEGNHADQLDASDFIFATAAATTGIEVVGGSGTQTDQLA.

PbH1 repeat units lie at residues 133–155 (DRDV…DPHE), 157–179 (TINL…VADF), 180–202 (QIGG…NIVT), 204–226 (TNDF…VVQR), 257–279 (AHDV…RVYG), 280–315 (AEDV…GVSG), and 320–359 (TTGT…SVSN). 10 Hemolysin-type calcium-binding repeats span residues 388–403 (GTAG…AHET), 406–422 (GLDG…NDIL), 424–439 (GGAG…GADL), 557–573 (GHAG…DDIL), 574–591 (VGGA…ADVF), 696–711 (GSAG…ADEV), 713–730 (HGGG…ADVF), 828–839 (GGDGNDTLSGSS), 846–862 (GGVG…NDIL), and 864–880 (GGAG…SDIF).

This sequence belongs to the D-mannuronate C5-epimerase family. Requires Ca(2+) as cofactor.

It localises to the secreted. It carries out the reaction [(1-&gt;4)-beta-D-mannuronosyl](n) = [alginate](n). Its pathway is glycan biosynthesis; alginate biosynthesis. With respect to regulation, inhibited by zinc. Functionally, converts beta-D-mannuronic acid (M) to alpha-L-guluronic acid (G), producing a polymer with gel-forming capacity, required for the formation of the cyst coat. This Azotobacter vinelandii protein is Mannuronan C5-epimerase AlgE2.